The primary structure comprises 228 residues: Indole-3-glycerol phosphate synthase (228 aa).

This sequence belongs to the TrpC family.

The enzyme catalyses 1-(2-carboxyphenylamino)-1-deoxy-D-ribulose 5-phosphate + H(+) = (1S,2R)-1-C-(indol-3-yl)glycerol 3-phosphate + CO2 + H2O. Its pathway is amino-acid biosynthesis; L-tryptophan biosynthesis; L-tryptophan from chorismate: step 4/5. This chain is Indole-3-glycerol phosphate synthase, found in Pyrococcus furiosus (strain ATCC 43587 / DSM 3638 / JCM 8422 / Vc1).